A 262-amino-acid polypeptide reads, in one-letter code: 4-hydroxy-2-oxo-heptane-1,7-dioate aldolase (262 aa).

His-45 functions as the Proton acceptor in the catalytic mechanism. Gln-147 provides a ligand contact to substrate. Residue Glu-149 participates in a divalent metal cation binding. Positions 174 and 175 each coordinate substrate. Asp-175 contacts a divalent metal cation.

This sequence belongs to the HpcH/HpaI aldolase family. Homohexamer; trimer of dimers. The cofactor is a divalent metal cation.

It carries out the reaction 4-hydroxy-2-oxoheptanedioate = succinate semialdehyde + pyruvate. The protein operates within aromatic compound metabolism; 4-hydroxyphenylacetate degradation; pyruvate and succinate semialdehyde from 4-hydroxyphenylacetate: step 7/7. Its function is as follows. Catalyzes the reversible retro-aldol cleavage of 4-hydroxy-2-ketoheptane-1,7-dioate (HKHD) to pyruvate and succinic semialdehyde. This is 4-hydroxy-2-oxo-heptane-1,7-dioate aldolase from Shigella boydii serotype 4 (strain Sb227).